The following is a 306-amino-acid chain: MNWITNYVRPKINSILGRREIPENLWIKDPTSGEMVFHKDLEVNQYVIPSSGYHMRISAKNRLTHFFDDGVYTPLENPKVVIDPLKFRDEKRYIDRLKDYRSKLGIDDNILSARGTIEGLPIIATVQDFAFMGGSLGMASGEAIIKAFDTAIAEKCPLVLFSASGGARMQEGTLSLMQMPRTTVAIEMLKEAKLPYIVVLTNPTTGGVTASYAMLGDIHIAEPGAMIGFAGPRVIQQTIRETLPEGFQSSEYLLKHGMIDMVVSRLEMKTTIARLLRLMMKYPPVVNPSNTSSTNSQASLSKAEAA.

In terms of domain architecture, CoA carboxyltransferase N-terminal spans 25 to 294 (LWIKDPTSGE…VVNPSNTSST (270 aa)). Residues 287–296 (NPSNTSSTNS) show a composition bias toward low complexity. Residues 287-306 (NPSNTSSTNSQASLSKAEAA) form a disordered region.

The protein belongs to the AccD/PCCB family. As to quaternary structure, acetyl-CoA carboxylase is a heterohexamer composed of biotin carboxyl carrier protein (AccB), biotin carboxylase (AccC) and two subunits each of ACCase subunit alpha (AccA) and ACCase subunit beta (AccD).

The protein resides in the cytoplasm. The enzyme catalyses N(6)-carboxybiotinyl-L-lysyl-[protein] + acetyl-CoA = N(6)-biotinyl-L-lysyl-[protein] + malonyl-CoA. It participates in lipid metabolism; malonyl-CoA biosynthesis; malonyl-CoA from acetyl-CoA: step 1/1. In terms of biological role, component of the acetyl coenzyme A carboxylase (ACC) complex. Biotin carboxylase (BC) catalyzes the carboxylation of biotin on its carrier protein (BCCP) and then the CO(2) group is transferred by the transcarboxylase to acetyl-CoA to form malonyl-CoA. The polypeptide is Acetyl-coenzyme A carboxylase carboxyl transferase subunit beta (Bartonella henselae (strain ATCC 49882 / DSM 28221 / CCUG 30454 / Houston 1) (Rochalimaea henselae)).